The following is a 236-amino-acid chain: 2,3,4,5-tetrahydropyridine-2,6-dicarboxylate N-acetyltransferase (236 aa).

This sequence belongs to the transferase hexapeptide repeat family. DapH subfamily.

The enzyme catalyses (S)-2,3,4,5-tetrahydrodipicolinate + acetyl-CoA + H2O = L-2-acetamido-6-oxoheptanedioate + CoA. It functions in the pathway amino-acid biosynthesis; L-lysine biosynthesis via DAP pathway; LL-2,6-diaminopimelate from (S)-tetrahydrodipicolinate (acetylase route): step 1/3. In terms of biological role, catalyzes the transfer of an acetyl group from acetyl-CoA to tetrahydrodipicolinate. The polypeptide is 2,3,4,5-tetrahydropyridine-2,6-dicarboxylate N-acetyltransferase (Listeria ivanovii).